A 275-amino-acid polypeptide reads, in one-letter code: Large ribosomal subunit protein uL2 (275 aa).

The interval 224 to 275 is disordered; the sequence is AMNPVDHPHGGGEGKAPIGHPGPLTPWGKPALGYKTRKKGKASDKFIVKRRK. A compositionally biased stretch (basic and acidic residues) spans 264–275; that stretch reads KASDKFIVKRRK.

Belongs to the universal ribosomal protein uL2 family. As to quaternary structure, part of the 50S ribosomal subunit. Forms a bridge to the 30S subunit in the 70S ribosome.

Functionally, one of the primary rRNA binding proteins. Required for association of the 30S and 50S subunits to form the 70S ribosome, for tRNA binding and peptide bond formation. It has been suggested to have peptidyltransferase activity; this is somewhat controversial. Makes several contacts with the 16S rRNA in the 70S ribosome. This is Large ribosomal subunit protein uL2 from Caldanaerobacter subterraneus subsp. tengcongensis (strain DSM 15242 / JCM 11007 / NBRC 100824 / MB4) (Thermoanaerobacter tengcongensis).